Here is a 164-residue protein sequence, read N- to C-terminus: C-type natriuretic peptide (164 aa).

Positions 1–23 are cleaved as a signal peptide; it reads MVASRLAAGGLLLLALLALALDG. Disordered regions lie at residues 24-93 and 115-134; these read KPAP…AAAA and HPEH…GASR. The propeptide occupies 24 to 142; the sequence is KPAPPQPLRK…SRRLKGVAKK (119 aa). Residues 58–67 show a composition bias toward gly residues; it reads AGGGGGGGRS. Low complexity predominate over residues 68-93; that stretch reads GSKAANAAPTAPKSKGGAAAAAAAAA. The span at 121–132 shows a compositional bias: gly residues; sequence GGGGGGGGGGGA. The cysteines at positions 148 and 164 are disulfide-linked.

Belongs to the natriuretic peptide family. As to expression, expressed by the venom gland.

It is found in the secreted. In terms of biological role, snake venom natriuretic peptide that has a vasorelaxant activity in rat aortic strips and a diuretic potency in anesthetized rats. May act by activating natriuretic receptors (NPR1 and/or NPR2). The protein is C-type natriuretic peptide of Philodryas olfersii (Green snake).